Reading from the N-terminus, the 259-residue chain is Pyrroloquinoline-quinone synthase (259 aa).

Belongs to the PqqC family.

It carries out the reaction 6-(2-amino-2-carboxyethyl)-7,8-dioxo-1,2,3,4,7,8-hexahydroquinoline-2,4-dicarboxylate + 3 O2 = pyrroloquinoline quinone + 2 H2O2 + 2 H2O + H(+). Its pathway is cofactor biosynthesis; pyrroloquinoline quinone biosynthesis. Its function is as follows. Ring cyclization and eight-electron oxidation of 3a-(2-amino-2-carboxyethyl)-4,5-dioxo-4,5,6,7,8,9-hexahydroquinoline-7,9-dicarboxylic-acid to PQQ. The chain is Pyrroloquinoline-quinone synthase from Bradyrhizobium diazoefficiens (strain JCM 10833 / BCRC 13528 / IAM 13628 / NBRC 14792 / USDA 110).